A 122-amino-acid chain; its full sequence is Small ribosomal subunit protein uS13 (122 aa).

A disordered region spans residues 93–122; sequence RRGLPVRGQRTKTNARTRKGPKKTIAGKKK.

It belongs to the universal ribosomal protein uS13 family. Part of the 30S ribosomal subunit. Forms a loose heterodimer with protein S19. Forms two bridges to the 50S subunit in the 70S ribosome.

Located at the top of the head of the 30S subunit, it contacts several helices of the 16S rRNA. In the 70S ribosome it contacts the 23S rRNA (bridge B1a) and protein L5 of the 50S subunit (bridge B1b), connecting the 2 subunits; these bridges are implicated in subunit movement. Contacts the tRNAs in the A and P-sites. The protein is Small ribosomal subunit protein uS13 of Corynebacterium jeikeium (strain K411).